The chain runs to 288 residues: Bis(5'-nucleosyl)-tetraphosphatase, symmetrical (288 aa).

This sequence belongs to the Ap4A hydrolase family.

The enzyme catalyses P(1),P(4)-bis(5'-adenosyl) tetraphosphate + H2O = 2 ADP + 2 H(+). Functionally, hydrolyzes diadenosine 5',5'''-P1,P4-tetraphosphate to yield ADP. The polypeptide is Bis(5'-nucleosyl)-tetraphosphatase, symmetrical (Pseudomonas putida (strain ATCC 700007 / DSM 6899 / JCM 31910 / BCRC 17059 / LMG 24140 / F1)).